A 411-amino-acid chain; its full sequence is Tyrosine--tRNA ligase (411 aa).

Y34 serves as a coordination point for L-tyrosine. The 'HIGH' region signature appears at 39 to 48 (CTATSLHIGS). Residues Y171 and Q175 each coordinate L-tyrosine. The short motif at 231-235 (KMGKT) is the 'KMSKS' region element. K234 provides a ligand contact to ATP. Positions 345-411 (ITAFELFHEA…GKKRHILVKI (67 aa)) constitute an S4 RNA-binding domain.

The protein belongs to the class-I aminoacyl-tRNA synthetase family. TyrS type 1 subfamily. Homodimer.

The protein resides in the cytoplasm. It carries out the reaction tRNA(Tyr) + L-tyrosine + ATP = L-tyrosyl-tRNA(Tyr) + AMP + diphosphate + H(+). Its function is as follows. Catalyzes the attachment of tyrosine to tRNA(Tyr) in a two-step reaction: tyrosine is first activated by ATP to form Tyr-AMP and then transferred to the acceptor end of tRNA(Tyr). This chain is Tyrosine--tRNA ligase, found in Rickettsia bellii (strain RML369-C).